The chain runs to 513 residues: Mannan endo-1,4-beta-mannosidase A and B (513 aa).

The first 26 residues, 1–26 (MKVYKKVAFVMAFIMFFSVLPTISMS), serve as a signal peptide directing secretion. The GH26 domain maps to 41 to 353 (QTTKNVYSWL…FNDSWVVNRG (313 aa)). Substrate is bound at residue His-132. Glu-195 functions as the Proton donor in the catalytic mechanism. Positions 200 and 270 each coordinate substrate. Catalysis depends on Glu-295, which acts as the Nucleophile. 429–430 (IK) is a substrate binding site.

It belongs to the glycosyl hydrolase 26 family.

It localises to the secreted. The enzyme catalyses Random hydrolysis of (1-&gt;4)-beta-D-mannosidic linkages in mannans, galactomannans and glucomannans.. Could be involved in the degradation of glucomannan and catalyzes the endo hydrolysis of beta-1,4-linked mannan, galactomannan and glucomannan. In Caldalkalibacillus mannanilyticus (strain DSM 16130 / CIP 109019 / JCM 10596 / AM-001) (Bacillus mannanilyticus), this protein is Mannan endo-1,4-beta-mannosidase A and B.